The primary structure comprises 440 residues: Diels-Alderase mycB (440 aa).

The signal sequence occupies residues 1–18 (MGYLVKLACGLLLPLATA). N-linked (GlcNAc...) asparagine glycans are attached at residues asparagine 80, asparagine 155, and asparagine 332.

Belongs to the Diels-Alderase family.

It catalyses the reaction (5S)-5-(2-methylpropyl)-3-[(2E,6R,8E,10E,12E)-6,8,10,12-tetramethyltetradeca-2,8,10,12-tetraenoyl]-2,5-dihydro-1H-pyrrol-2-one = (5S)-3-[(1S,2R,4aR,6R,8aS)-2-(but-2-en-2-yl)-3,4a,6-trimethyl-1,2,4a,5,6,7,8,8a-octahydronaphthalene-1-carbonyl]-5-(2-methylpropyl)-2,5-dihydro-1H-pyrrol-2-one. The catalysed reaction is (5Z)-5-(2-methylpropylidene)-3-[(2E,6R,8E,10E,12E)-6,8,10,12-tetramethyltetradeca-2,8,10,12-tetraenoyl]-2,5-dihydro-1H-pyrrol-2-one = myceliothermophin E. Its pathway is mycotoxin biosynthesis. Diels-Alderase; part of the gene cluster that mediates the biosynthesis of myceliothermophins, mycotoxins that contain a trans-fused decalin ring system connected to a conjugated 3-pyrrolin-2-one moiety and that have potential anti-tumor properties. The polyketide synthase module (PKS) of the PKS-NRPS mycA is responsible for the synthesis of the octaketide backbone. The downstream nonribosomal peptide synthetase (NRPS) module then amidates the carboxyl end of the octaketide with a leucine. A reductase-like domain (R) at the C-terminus catalyzes the reductive release of the polyketide-amino acid intermediate. Because mycA lacks a designated enoylreductase (ER) domain, the required activity is provided the enoyl reductase mycC. Following mycA-catalyzed construction and release of aminoacyl polyketide aldehyde, Knoevenagel condensation yields the expected ketone. This C18 keto acyclic precursor is the substrate of the Diels-Alderase mycB, that catalyzes the Diels-Alder cycloaddition to produce myceliothermophin E. A yet unknown oxygenase involved in the production of myceliothermophin A, via substitution with a hydroxyl group at the C21, has still to be identified. This is Diels-Alderase mycB from Thermothelomyces thermophilus (strain ATCC 42464 / BCRC 31852 / DSM 1799) (Sporotrichum thermophile).